A 378-amino-acid polypeptide reads, in one-letter code: Phosphatidyl-myo-inositol mannosyltransferase (378 aa).

GDP-alpha-D-mannose contacts are provided by Tyr-9 and Gly-16. A 1,2-diacyl-sn-glycero-3-phospho-(1D-myo-inositol) is bound by residues Gln-18, 62–63, and Arg-68; that span reads YN. Residues Arg-196, 201–202, 251–253, Lys-256, 274–278, and Glu-282 each bind GDP-alpha-D-mannose; these read RK, VDD, and ESFGI.

Belongs to the glycosyltransferase group 1 family. In terms of assembly, monomer. Mg(2+) is required as a cofactor.

The protein localises to the cell membrane. The catalysed reaction is a 1,2-diacyl-sn-glycero-3-phospho-(1D-myo-inositol) + GDP-alpha-D-mannose = a 1,2-diacyl-sn-glycero-3-phospho-[alpha-D-mannopyranosyl-(1&lt;-&gt;6)-D-myo-inositol] + GDP + H(+). It functions in the pathway phospholipid metabolism; phosphatidylinositol metabolism. In terms of biological role, involved in the biosynthesis of phosphatidyl-myo-inositol mannosides (PIM) which are early precursors in the biosynthesis of lipomannans (LM) and lipoarabinomannans (LAM). Catalyzes the addition of a mannosyl residue from GDP-D-mannose (GDP-Man) to the position 2 of the carrier lipid phosphatidyl-myo-inositol (PI) to generate a phosphatidyl-myo-inositol bearing an alpha-1,2-linked mannose residue (PIM1). The polypeptide is Phosphatidyl-myo-inositol mannosyltransferase (Mycobacterium bovis (strain ATCC BAA-935 / AF2122/97)).